Here is a 501-residue protein sequence, read N- to C-terminus: MEVDGEARPFLLFSKPKSSKKKPKQEAEPQVHTQPEEPPNPSPSPAIEPDLRDSDEAPAAAVTEHAGDDAAAAAVPSTFAELGLSQWLVDVCDSLGMRVPTAVQRRCIPRALEGRDVLGIAETGSGKTAAFALPILHRLGEDPYGVAALALAPTRELAAQLAEQFRALGAPLGLRCLAAIGGFDSLGQAKGLARRPHVVVATPGRIATLINDDPDLAKVFARTKFLVLDEADRVLDINFEEDLRVIFGSLPKKRQTFLFSATISDNLRSLLELSGNNSYFFEAYEGFKTVDTLKQLYIHVPPDAKELYLFYLLSKMNEDNIRSVIVFVSTCRTCQYLDFLLEELGHPAVSLHSHKPQSRRLAALHNFKSSKVPVLLATDVASRGLDIQTVDLVINYDVPRYPRDYIHRVGRTARATRGGLSISFITTQRDIRLLHEIEDVVGKQLGAYDGEMRDVNKDATKVFKARRLANMKMADEGHEDKVQARKEQKKRAQERKRKHDE.

A disordered region spans residues 1–68; that stretch reads MEVDGEARPF…AAAVTEHAGD (68 aa). Pro residues predominate over residues 36–46; the sequence is EEPPNPSPSPA. Positions 59-68 are enriched in low complexity; it reads AAAVTEHAGD. A Q motif motif is present at residues 77 to 105; the sequence is STFAELGLSQWLVDVCDSLGMRVPTAVQR. One can recognise a Helicase ATP-binding domain in the interval 108–281; that stretch reads IPRALEGRDV…ELSGNNSYFF (174 aa). 121–128 provides a ligand contact to ATP; it reads AETGSGKT. The DEAD box signature appears at 229–232; it reads DEAD. In terms of domain architecture, Helicase C-terminal spans 292–456; sequence TLKQLYIHVP…AYDGEMRDVN (165 aa). The segment covering 473–486 has biased composition (basic and acidic residues); that stretch reads MADEGHEDKVQARK. Positions 473–501 are disordered; the sequence is MADEGHEDKVQARKEQKKRAQERKRKHDE. Residues 475–501 are a coiled coil; it reads DEGHEDKVQARKEQKKRAQERKRKHDE. Over residues 487–501 the composition is skewed to basic residues; it reads EQKKRAQERKRKHDE.

The protein belongs to the DEAD box helicase family. DDX49/DBP8 subfamily.

The catalysed reaction is ATP + H2O = ADP + phosphate + H(+). The sequence is that of DEAD-box ATP-dependent RNA helicase 36 from Oryza sativa subsp. japonica (Rice).